The sequence spans 349 residues: Decapping nuclease RAI1 (349 aa).

Glu-157 is an a divalent metal cation binding site. Glu-205 contributes to the substrate binding site. Residues Asp-207, Glu-222, and Leu-223 each coordinate a divalent metal cation. Lys-224 and Gln-248 together coordinate substrate.

The protein belongs to the DXO/Dom3Z family. As to quaternary structure, interacts with RAT1; the interaction is direct, stabilizes RAT1 protein structure and stimulates its exoribonuclease activity. The interaction also stimulates RAI1 pyrophosphohydrolase activity, probably by recruiting it to mRNA substrates. A divalent metal cation is required as a cofactor.

Its subcellular location is the nucleus. It catalyses the reaction a 5'-end NAD(+)-phospho-ribonucleoside in mRNA + H2O = a 5'-end phospho-ribonucleoside in mRNA + NAD(+) + H(+). It carries out the reaction a 5'-end (N(7)-methyl 5'-triphosphoguanosine)-ribonucleoside-ribonucleotide in mRNA + H2O = a (N(7)-methyl 5'-triphosphoguanosine)-nucleoside + a 5'-end phospho-ribonucleoside in mRNA + H(+). The enzyme catalyses a 5'-end triphospho-ribonucleoside in mRNA + H2O = a 5'-end phospho-ribonucleoside in mRNA + diphosphate + H(+). In terms of biological role, decapping enzyme for NAD-capped RNAs: specifically hydrolyzes the nicotinamide adenine dinucleotide (NAD) cap from a subset of RNAs by removing the entire NAD moiety from the 5'-end of an NAD-capped RNA. The NAD-cap is present at the 5'-end of some RNAs and snoRNAs. In contrast to the canonical 5'-end N7 methylguanosine (m7G) cap, the NAD cap promotes mRNA decay. Also acts as a non-canonical decapping enzyme that removes the entire cap structure of m7G capped or incompletely capped RNAs. Has decapping activity toward incomplete 5'-end m7G cap mRNAs such as unmethylated 5'-end-capped RNA (cap0), while it has no activity toward 2'-O-ribose methylated m7G cap (cap1). Also possesses RNA 5'-pyrophosphohydrolase activity by hydrolyzing the 5'-end triphosphate to release pyrophosphates. Stimulates exoribonuclease activity of Rat1, allowing it to degrade RNAs with stable secondary structure more effectively. This is Decapping nuclease RAI1 (RAI1) from Yarrowia lipolytica (strain CLIB 122 / E 150) (Yeast).